A 3184-amino-acid polypeptide reads, in one-letter code: Cilia and flagella-associated protein 47 (3184 aa).

Positions 1729-1851 (SDSERILLSW…LCVYLYERLP (123 aa)) constitute a Calponin-homology (CH) domain. Residues 2491–2514 (RDEEESQEETDTEKDFSSQETPSD) are disordered. Acidic residues predominate over residues 2493–2502 (EEESQEETDT).

In terms of assembly, interacts with CFAP65. Highly expressed in spermatzoa (at protein level).

It localises to the cytoplasm. Its subcellular location is the cytoskeleton. The protein localises to the flagellum basal body. Plays a role in flagellar formation and sperm motility. The polypeptide is Cilia and flagella-associated protein 47 (Mus musculus (Mouse)).